A 1831-amino-acid chain; its full sequence is Transmembrane protein 131 homolog (1831 aa).

Residues methionine 1–alanine 29 form the signal peptide. The Lumenal portion of the chain corresponds to aspartate 30–asparagine 1169. The interval glutamate 118 to leucine 294 is papD-L domain. Residues isoleucine 1170–alanine 1190 traverse the membrane as a helical segment. Topologically, residues tyrosine 1191–asparagine 1831 are cytoplasmic. Low complexity predominate over residues serine 1223–threonine 1234. 4 disordered regions span residues serine 1223–threonine 1252, glycine 1325–aspartate 1516, glutamine 1663–proline 1759, and tryptophan 1800–asparagine 1831. Positions proline 1338–alanine 1349 are enriched in acidic residues. 2 stretches are compositionally biased toward low complexity: residues proline 1394 to glutamine 1407 and glutamine 1435 to threonine 1448. A compositionally biased stretch (basic and acidic residues) spans glutamate 1455 to lysine 1467. Residues threonine 1480–alanine 1497 show a composition bias toward polar residues. Over residues proline 1500–threonine 1514 the composition is skewed to low complexity. Composition is skewed to polar residues over residues serine 1669–lysine 1687, asparagine 1702–glutamine 1733, and tryptophan 1742–asparagine 1758. The span at proline 1808–glutamine 1820 shows a compositional bias: low complexity. Over residues threonine 1822 to asparagine 1831 the composition is skewed to acidic residues.

This sequence belongs to the TMEM131 family. As to quaternary structure, may interact (via PapD-L domain) with collagen proteins (via C-terminus); the interaction is direct and is involved in assembly and secretion of collagen. Predominantly expressed in the intestine and hypodermis.

It localises to the membrane. Its subcellular location is the endoplasmic reticulum membrane. Collagen binding transmembrane protein involved in collagen secretion, probably by recruiting the ER-to-Golgi transport complex TRAPPIII. Required for normal development. The sequence is that of Transmembrane protein 131 homolog from Caenorhabditis elegans.